Here is a 172-residue protein sequence, read N- to C-terminus: Disulfide bond formation protein B (172 aa).

Residues methionine 1 to glutamine 11 are Cytoplasmic-facing. A helical membrane pass occupies residues phenylalanine 12 to tyrosine 28. Residues valine 29–isoleucine 46 are Periplasmic-facing. The cysteines at positions 38 and 41 are disulfide-linked. The chain crosses the membrane as a helical span at residues alanine 47–proline 63. Topologically, residues arginine 64–lysine 70 are cytoplasmic. The helical transmembrane segment at valine 71–alanine 88 threads the bilayer. Over arginine 89–methionine 145 the chain is Periplasmic. Cysteines 104 and 131 form a disulfide. Residues tryptophan 146–lysine 164 form a helical membrane-spanning segment. The Cytoplasmic portion of the chain corresponds to alanine 165 to histidine 172.

It belongs to the DsbB family.

The protein resides in the cell inner membrane. Functionally, required for disulfide bond formation in some periplasmic proteins. Acts by oxidizing the DsbA protein. This Xanthomonas euvesicatoria pv. vesicatoria (strain 85-10) (Xanthomonas campestris pv. vesicatoria) protein is Disulfide bond formation protein B.